We begin with the raw amino-acid sequence, 213 residues long: MFVTEAYAQSAPTVGETHTETPAVGQPQPEATHTETGVAHGAEHGASGVFPPFDQSTYASQVLWLAITFGLFYLLMQKVIVPRVGGILENRHGRIAQDLDEAARLKAEADTAVETYEKELAAARAKASSIGASARDAAKAKADADRAAIEAGLAEKLAAAEKRIAGIRDHAFADVGAIAEETATAIVDQLVGAKVKDTDVKAAIAAASAVKGA.

The disordered stretch occupies residues 1–45; that stretch reads MFVTEAYAQSAPTVGETHTETPAVGQPQPEATHTETGVAHGAEHG. A helical transmembrane segment spans residues 57–76; that stretch reads TYASQVLWLAITFGLFYLLM.

This sequence belongs to the ATPase B chain family. As to quaternary structure, F-type ATPases have 2 components, F(1) - the catalytic core - and F(0) - the membrane proton channel. F(1) has five subunits: alpha(3), beta(3), gamma(1), delta(1), epsilon(1). F(0) has three main subunits: a(1), b(2) and c(10-14). The alpha and beta chains form an alternating ring which encloses part of the gamma chain. F(1) is attached to F(0) by a central stalk formed by the gamma and epsilon chains, while a peripheral stalk is formed by the delta and b chains.

It localises to the cell inner membrane. F(1)F(0) ATP synthase produces ATP from ADP in the presence of a proton or sodium gradient. F-type ATPases consist of two structural domains, F(1) containing the extramembraneous catalytic core and F(0) containing the membrane proton channel, linked together by a central stalk and a peripheral stalk. During catalysis, ATP synthesis in the catalytic domain of F(1) is coupled via a rotary mechanism of the central stalk subunits to proton translocation. In terms of biological role, component of the F(0) channel, it forms part of the peripheral stalk, linking F(1) to F(0). The b'-subunit is a diverged and duplicated form of b found in plants and photosynthetic bacteria. The polypeptide is ATP synthase subunit b 2 (atpF2) (Agrobacterium fabrum (strain C58 / ATCC 33970) (Agrobacterium tumefaciens (strain C58))).